The sequence spans 409 residues: Tryptophan synthase beta chain (409 aa).

Lys-86 bears the N6-(pyridoxal phosphate)lysine mark.

This sequence belongs to the TrpB family. As to quaternary structure, tetramer of two alpha and two beta chains. Pyridoxal 5'-phosphate is required as a cofactor.

It carries out the reaction (1S,2R)-1-C-(indol-3-yl)glycerol 3-phosphate + L-serine = D-glyceraldehyde 3-phosphate + L-tryptophan + H2O. It functions in the pathway amino-acid biosynthesis; L-tryptophan biosynthesis; L-tryptophan from chorismate: step 5/5. In terms of biological role, the beta subunit is responsible for the synthesis of L-tryptophan from indole and L-serine. The sequence is that of Tryptophan synthase beta chain from Shewanella pealeana (strain ATCC 700345 / ANG-SQ1).